Reading from the N-terminus, the 584-residue chain is Proline--tRNA ligase (584 aa).

The protein belongs to the class-II aminoacyl-tRNA synthetase family. ProS type 1 subfamily. As to quaternary structure, homodimer.

The protein resides in the cytoplasm. It carries out the reaction tRNA(Pro) + L-proline + ATP = L-prolyl-tRNA(Pro) + AMP + diphosphate. Functionally, catalyzes the attachment of proline to tRNA(Pro) in a two-step reaction: proline is first activated by ATP to form Pro-AMP and then transferred to the acceptor end of tRNA(Pro). As ProRS can inadvertently accommodate and process non-cognate amino acids such as alanine and cysteine, to avoid such errors it has two additional distinct editing activities against alanine. One activity is designated as 'pretransfer' editing and involves the tRNA(Pro)-independent hydrolysis of activated Ala-AMP. The other activity is designated 'posttransfer' editing and involves deacylation of mischarged Ala-tRNA(Pro). The misacylated Cys-tRNA(Pro) is not edited by ProRS. The chain is Proline--tRNA ligase from Mycobacterium sp. (strain KMS).